A 141-amino-acid polypeptide reads, in one-letter code: Cystatin-SA (141 aa).

Residues 1 to 20 (MAWPLCTLLLLLATQAVALA) form the signal peptide. The Secondary area of contact signature appears at 76–80 (QIVGG). 2 cysteine pairs are disulfide-bonded: Cys94-Cys104 and Cys118-Cys138.

In terms of tissue distribution, expressed in submandibular and sublingual saliva but not in parotid saliva (at protein level). Expressed in submandibular gland and parotid gland.

The protein resides in the secreted. Thiol protease inhibitor. The polypeptide is Cystatin-SA (CST2) (Homo sapiens (Human)).